The primary structure comprises 893 residues: Translation initiation factor IF-2 (893 aa).

Disordered stretches follow at residues 51–203 (KEHG…AEAE) and 216–300 (EENE…SMQH). 3 stretches are compositionally biased toward basic and acidic residues: residues 102 to 203 (ALEE…AEAE), 216 to 238 (EENE…DADY), and 245 to 261 (HARE…EQQP). A tr-type G domain is found at 392–561 (GRAPVVTIMG…LLQSEVLELT (170 aa)). Residues 401–408 (GHVDHGKT) form a G1 region. 401 to 408 (GHVDHGKT) contacts GTP. A G2 region spans residues 426 to 430 (GITQH). Residues 447–450 (DTPG) are G3. Residues 447-451 (DTPGH) and 501-504 (NKID) each bind GTP. Residues 501-504 (NKID) are G4. Residues 537–539 (SAK) form a G5 region.

Belongs to the TRAFAC class translation factor GTPase superfamily. Classic translation factor GTPase family. IF-2 subfamily.

The protein resides in the cytoplasm. In terms of biological role, one of the essential components for the initiation of protein synthesis. Protects formylmethionyl-tRNA from spontaneous hydrolysis and promotes its binding to the 30S ribosomal subunits. Also involved in the hydrolysis of GTP during the formation of the 70S ribosomal complex. This is Translation initiation factor IF-2 from Aliivibrio fischeri (strain MJ11) (Vibrio fischeri).